The chain runs to 834 residues: MRSYRCWRKVQETIRLYSSSSSSASSLLEFVNADFPSTIGIRGRREFARLLQLRASDDLLHYQNVVHGQIIVWGLELDTYLSNILINLYSRAGGMVYARKVFEKMPERNLVSWSTMVSACNHHGIYEESLVVFLEFWRTRKDSPNEYILSSFIQACSGLDGRGRWMVFQLQSFLVKSGFDRDVYVGTLLIDFYLKDGNIDYARLVFDALPEKSTVTWTTMISGCVKMGRSYVSLQLFYQLMEDNVVPDGYILSTVLSACSILPFLEGGKQIHAHILRYGLEMDASLMNVLIDSYVKCGRVIAAHKLFNGMPNKNIISWTTLLSGYKQNALHKEAMELFTSMSKFGLKPDMYACSSILTSCASLHALGFGTQVHAYTIKANLGNDSYVTNSLIDMYAKCDCLTDARKVFDIFAAADVVLFNAMIEGYSRLGTQWELHEALNIFRDMRFRLIRPSLLTFVSLLRASASLTSLGLSKQIHGLMFKYGLNLDIFAGSALIDVYSNCYCLKDSRLVFDEMKVKDLVIWNSMFAGYVQQSENEEALNLFLELQLSRERPDEFTFANMVTAAGNLASVQLGQEFHCQLLKRGLECNPYITNALLDMYAKCGSPEDAHKAFDSAASRDVVCWNSVISSYANHGEGKKALQMLEKMMSEGIEPNYITFVGVLSACSHAGLVEDGLKQFELMLRFGIEPETEHYVCMVSLLGRAGRLNKARELIEKMPTKPAAIVWRSLLSGCAKAGNVELAEHAAEMAILSDPKDSGSFTMLSNIYASKGMWTEAKKVRERMKVEGVVKEPGRSWIGINKEVHIFLSKDKSHCKANQIYEVLDDLLVQIRGVS.

PPR repeat units follow at residues 78–112, 113–144, 145–181, 182–212, 213–247, 248–282, 283–313, 314–348, 349–383, 384–414, 415–452, 453–487, 488–518, 519–553, 554–588, 589–619, 620–654, 655–689, and 690–720; these read DTYL…NLVS, WSTM…KDSP, NEYI…GFDR, DVYV…LPEK, STVT…NVVP, DGYI…GLEM, DASL…MPNK, NIIS…GLKP, DMYA…NLGN, DSYV…FAAA, DVVL…LIRP, SLLT…GLNL, DIFA…MKVK, DLVI…RERP, DEFT…GLEC, NPYI…AASR, DVVC…GIEP, NYIT…GIEP, and ETEH…MPTK. Residues 725-800 are type E motif; it reads VWRSLLSGCA…EPGRSWIGIN (76 aa). The tract at residues 801-831 is type E(+) motif; that stretch reads KEVHIFLSKDKSHCKANQIYEVLDDLLVQIR.

Belongs to the PPR family. PCMP-E subfamily.

The polypeptide is Pentatricopeptide repeat-containing protein At4g39530 (PCMP-E52) (Arabidopsis thaliana (Mouse-ear cress)).